The chain runs to 134 residues: Small ribosomal subunit protein uS8 (134 aa).

The protein belongs to the universal ribosomal protein uS8 family. As to quaternary structure, part of the 30S ribosomal subunit. Contacts proteins S5 and S12.

Functionally, one of the primary rRNA binding proteins, it binds directly to 16S rRNA central domain where it helps coordinate assembly of the platform of the 30S subunit. The polypeptide is Small ribosomal subunit protein uS8 (Nitratiruptor sp. (strain SB155-2)).